Consider the following 644-residue polypeptide: Protein DA1-related 6 (644 aa).

3 UIM domains span residues 119 to 138 (EEDE…NNRR), 181 to 200 (DVDE…KGKG), and 244 to 263 (DEDE…KGQI). The 72-residue stretch at 284-355 (SLCGGCNFAV…YVCKEKKMKT (72 aa)) folds into the LIM zinc-binding domain. Residues 572–589 (ASSSASSSSRTPPAASAS) are compositionally biased toward low complexity. The disordered stretch occupies residues 572–591 (ASSSASSSSRTPPAASASKK).

Interacts with ubiquitin.

Its function is as follows. Ubiquitin receptor that probably regulates developmental process. This is Protein DA1-related 6 (DAR6) from Arabidopsis thaliana (Mouse-ear cress).